The primary structure comprises 329 residues: D-alanine--D-alanine ligase (329 aa).

In terms of domain architecture, ATP-grasp spans 120–326 (KLWYDAIGIP…FHEFLADCIN (207 aa)). 150–205 (AFDKWGKVFVKAARQGSSVGCYSVTNKQSVSQAVNDAFGYSEQVLVEKSVKPRELE) provides a ligand contact to ATP. Residues Asp-280, Glu-293, and Asn-295 each contribute to the Mg(2+) site.

Belongs to the D-alanine--D-alanine ligase family. Requires Mg(2+) as cofactor. Mn(2+) serves as cofactor.

Its subcellular location is the cytoplasm. The enzyme catalyses 2 D-alanine + ATP = D-alanyl-D-alanine + ADP + phosphate + H(+). The protein operates within cell wall biogenesis; peptidoglycan biosynthesis. In terms of biological role, cell wall formation. The chain is D-alanine--D-alanine ligase from Vibrio campbellii (strain ATCC BAA-1116).